We begin with the raw amino-acid sequence, 80 residues long: Large ribosomal subunit protein bL31 (80 aa).

The Zn(2+) site is built by Cys-16, Cys-18, Cys-36, and Cys-39.

This sequence belongs to the bacterial ribosomal protein bL31 family. Type A subfamily. In terms of assembly, part of the 50S ribosomal subunit. It depends on Zn(2+) as a cofactor.

Its function is as follows. Binds the 23S rRNA. This Methylacidiphilum infernorum (isolate V4) (Methylokorus infernorum (strain V4)) protein is Large ribosomal subunit protein bL31.